Reading from the N-terminus, the 429-residue chain is Transcription factor IIIA (429 aa).

A disordered region spans residues M1 to R45. Over residues S24–N44 the composition is skewed to low complexity. C2H2-type zinc fingers lie at residues Y49–H74, F80–H102, F108–H130, F134–H159, L163–H186, Y194–H219, L222–H244, W253–H277, and Y365–H389. Residues K406–P416 show a composition bias toward basic and acidic residues. Residues K406–K429 are disordered.

The protein resides in the nucleus. In terms of biological role, interacts with the internal control region (ICR) of approximately 50 bases within the 5S RNA genes, is required for correct transcription of these genes by RNA polymerase III. Also binds the transcribed 5S RNA's. In Saccharomyces cerevisiae (strain ATCC 204508 / S288c) (Baker's yeast), this protein is Transcription factor IIIA (PZF1).